A 451-amino-acid chain; its full sequence is MTSLQYFSLNRPVFPATHLHRPGIRHLQVSACANVEVQAPSSVKKQGVSKEVMEAAGRVLVGTYARVPVVLSRGKGCKLYDPEGREYLDLSAGIAVNVLGHADSDWLRAVTEQAATLTHVSNVFYSIPQVELAKRLVASSFADRVFFSNSGTEANEAAIKFARKFQRFTRPDEKQPATEFVSFSNSFHGRTMGSLALTSKENYRSPFEPVMPGVTFLEYGNIEAATQLIQRRKIAAVFVEPIQGEGGVYSATKEFLYALRKACDDSGTLLVFDEVQCGLGRTGYLWAHEIYDVFPDIMTLAKPLAGGLPIGAVLVTERVASAITYGDHGTTFAGGPLVCKAALTVLDKILRPGFLASVSKKGHYFKEMLINKLGGNSHVREVRGVGLIVGIELDVSASPLVNACLNSGLLVLTAGKGNVVRIVPPLIITEQELEKAAEILLQCLPALDRHG.

Lysine 302 is modified (N6-(pyridoxal phosphate)lysine).

It belongs to the class-III pyridoxal-phosphate-dependent aminotransferase family. It depends on pyridoxal 5'-phosphate as a cofactor. In terms of tissue distribution, found at highest levels in nodules, confined to the infected cells.

It localises to the mitochondrion. It catalyses the reaction N(2)-acetyl-L-ornithine + 2-oxoglutarate = N-acetyl-L-glutamate 5-semialdehyde + L-glutamate. It functions in the pathway amino-acid biosynthesis; L-arginine biosynthesis; N(2)-acetyl-L-ornithine from L-glutamate: step 4/4. Functionally, involved in the biosynthesis of citrulline. The polypeptide is Acetylornithine aminotransferase, mitochondrial (AG118) (Alnus glutinosa (European alder)).